A 335-amino-acid polypeptide reads, in one-letter code: Holliday junction branch migration complex subunit RuvB (335 aa).

The segment at 4 to 184 (ADRLVSAEVL…FGIVQRLEFY (181 aa)) is large ATPase domain (RuvB-L). Residues Ile-23, Arg-24, Gly-65, Lys-68, Thr-69, Thr-70, 131–133 (EDY), Arg-174, Tyr-184, and Arg-221 contribute to the ATP site. Thr-69 is a binding site for Mg(2+). Residues 185–255 (NVDDLQSIVS…IATRALDMLS (71 aa)) form a small ATPAse domain (RuvB-S) region. Positions 258–335 (AAGFDYLDRK…RHFGMVRNQE (78 aa)) are head domain (RuvB-H). 3 residues coordinate DNA: Arg-294, Arg-313, and Arg-318.

Belongs to the RuvB family. In terms of assembly, homohexamer. Forms an RuvA(8)-RuvB(12)-Holliday junction (HJ) complex. HJ DNA is sandwiched between 2 RuvA tetramers; dsDNA enters through RuvA and exits via RuvB. An RuvB hexamer assembles on each DNA strand where it exits the tetramer. Each RuvB hexamer is contacted by two RuvA subunits (via domain III) on 2 adjacent RuvB subunits; this complex drives branch migration. In the full resolvosome a probable DNA-RuvA(4)-RuvB(12)-RuvC(2) complex forms which resolves the HJ.

The protein resides in the cytoplasm. It catalyses the reaction ATP + H2O = ADP + phosphate + H(+). The RuvA-RuvB-RuvC complex processes Holliday junction (HJ) DNA during genetic recombination and DNA repair, while the RuvA-RuvB complex plays an important role in the rescue of blocked DNA replication forks via replication fork reversal (RFR). RuvA specifically binds to HJ cruciform DNA, conferring on it an open structure. The RuvB hexamer acts as an ATP-dependent pump, pulling dsDNA into and through the RuvAB complex. RuvB forms 2 homohexamers on either side of HJ DNA bound by 1 or 2 RuvA tetramers; 4 subunits per hexamer contact DNA at a time. Coordinated motions by a converter formed by DNA-disengaged RuvB subunits stimulates ATP hydrolysis and nucleotide exchange. Immobilization of the converter enables RuvB to convert the ATP-contained energy into a lever motion, pulling 2 nucleotides of DNA out of the RuvA tetramer per ATP hydrolyzed, thus driving DNA branch migration. The RuvB motors rotate together with the DNA substrate, which together with the progressing nucleotide cycle form the mechanistic basis for DNA recombination by continuous HJ branch migration. Branch migration allows RuvC to scan DNA until it finds its consensus sequence, where it cleaves and resolves cruciform DNA. In Photorhabdus laumondii subsp. laumondii (strain DSM 15139 / CIP 105565 / TT01) (Photorhabdus luminescens subsp. laumondii), this protein is Holliday junction branch migration complex subunit RuvB.